The sequence spans 405 residues: Argininosuccinate synthase (405 aa).

Residues 10-18 and Ala37 each bind ATP; that span reads AYSGGLDTS. Positions 88 and 93 each coordinate L-citrulline. Gly118 contributes to the ATP binding site. Positions 120, 124, and 125 each coordinate L-aspartate. Asn124 lines the L-citrulline pocket. Arg128, Ser179, Ser188, Glu264, and Tyr276 together coordinate L-citrulline.

The protein belongs to the argininosuccinate synthase family. Type 1 subfamily. Homotetramer.

Its subcellular location is the cytoplasm. The catalysed reaction is L-citrulline + L-aspartate + ATP = 2-(N(omega)-L-arginino)succinate + AMP + diphosphate + H(+). Its pathway is amino-acid biosynthesis; L-arginine biosynthesis; L-arginine from L-ornithine and carbamoyl phosphate: step 2/3. This chain is Argininosuccinate synthase, found in Pseudomonas syringae pv. syringae (strain B728a).